A 778-amino-acid chain; its full sequence is Tastin (778 aa).

Positions 1–11 (MTTRQATKDPL) are enriched in basic and acidic residues. Positions 1 to 115 (MTTRQATKDP…PGPPAQTEAP (115 aa)) are disordered. 3 positions are modified to phosphoserine: serine 16, serine 98, and serine 170. Residues 212–244 (ISPSGPSFHPSTRPSFQELRRETAGSSRTSVSQ) are disordered. Polar residues predominate over residues 235-244 (AGSSRTSVSQ). A phosphoserine mark is found at serine 324, serine 334, serine 344, and serine 362. Threonine 363 is modified (phosphothreonine). A Phosphoserine modification is found at serine 376. 3 disordered regions span residues 406–425 (EGSGKPPVATPSGPHSNRTP), 508–587 (ECGE…AEPR), and 600–641 (PESS…RVEL). The segment covering 513-523 (QPCPPAEPGPP) has biased composition (pro residues). 4 tandem repeats follow at residues 516 to 548 (PPAEPGPPEAFCRSEPEIPEPSLQEQLEVPEPY), 549 to 581 (PPAEPRPLESCCRSEPEIPESSRQEQLEVPEPC), 582 to 614 (PPAEPRPLESYCRIEPEIPESSRQEQLEVPEPC), and 615 to 647 (PPAEPGPLQPSTQGQSGPPGPCPRVELGASEPC). The tract at residues 516–647 (PPAEPGPPEA…RVELGASEPC (132 aa)) is 4 X 33 AA approximate tandem repeats. Positions 560–574 (CRSEPEIPESSRQEQ) are enriched in basic and acidic residues. Pro residues predominate over residues 612-622 (EPCPPAEPGPL).

In terms of assembly, directly binds bystin, and indirectly trophinin. Strong expression at implantation sites. Was exclusively localized to the apical side of the syncytiotrophoblast. Also found in macrophages.

The protein localises to the cytoplasm. In terms of biological role, could be involved with bystin and trophinin in a cell adhesion molecule complex that mediates an initial attachment of the blastocyst to uterine epithelial cells at the time of the embryo implantation. This Homo sapiens (Human) protein is Tastin (TROAP).